The following is a 616-amino-acid chain: Chaperone protein HscA homolog (616 aa).

This sequence belongs to the heat shock protein 70 family.

Chaperone involved in the maturation of iron-sulfur cluster-containing proteins. Has a low intrinsic ATPase activity which is markedly stimulated by HscB. The protein is Chaperone protein HscA homolog of Histophilus somni (strain 129Pt) (Haemophilus somnus).